A 118-amino-acid polypeptide reads, in one-letter code: Ribosome-binding factor A (118 aa).

This sequence belongs to the RbfA family. Monomer. Binds 30S ribosomal subunits, but not 50S ribosomal subunits or 70S ribosomes.

It localises to the cytoplasm. In terms of biological role, one of several proteins that assist in the late maturation steps of the functional core of the 30S ribosomal subunit. Associates with free 30S ribosomal subunits (but not with 30S subunits that are part of 70S ribosomes or polysomes). Required for efficient processing of 16S rRNA. May interact with the 5'-terminal helix region of 16S rRNA. In Clostridium beijerinckii (strain ATCC 51743 / NCIMB 8052) (Clostridium acetobutylicum), this protein is Ribosome-binding factor A.